The chain runs to 292 residues: 2-(5''-triphosphoribosyl)-3'-dephosphocoenzyme-A synthase (292 aa).

This sequence belongs to the CitG/MdcB family.

It catalyses the reaction 3'-dephospho-CoA + ATP = 2'-(5''-triphospho-alpha-D-ribosyl)-3'-dephospho-CoA + adenine. Catalyzes the formation of 2-(5''-triphosphoribosyl)-3'-dephosphocoenzyme-A, the precursor of the prosthetic group of the holo-acyl carrier protein (gamma chain) of citrate lyase, from ATP and dephospho-CoA. The protein is 2-(5''-triphosphoribosyl)-3'-dephosphocoenzyme-A synthase of Escherichia coli O127:H6 (strain E2348/69 / EPEC).